Here is a 326-residue protein sequence, read N- to C-terminus: Probable iron chelatin transport system permease protein jhp_0822 (326 aa).

Helical transmembrane passes span 7-27, 64-84, 91-111, 113-133, 142-162, 164-184, 187-207, 241-261, 275-295, and 301-321; these read IALACVILAVVVLLFGGESLS, ILALLVGASLSGSGVVMQTIL, PFLLGISSGAMLGVAMAIAVV, SNIAILAFFGAILPSLAVLAM, LSLVLSGVVLSAFLSALAGAI, FFVIPQKAQAIVVWLLGSLSL, YKDCLIAFIGLSLGFIPLFLL, VASALAVSVSGTIGWIGLVIP, LLLSSLLMGAFFLLLADVVAK, and DLPVGIATSVLGAPFFLWLLF.

It belongs to the binding-protein-dependent transport system permease family. FecCD subfamily.

It localises to the cell inner membrane. Functionally, part of a binding-protein-dependent transport system for an iron chelatin; probably responsible for the translocation of the substrate across the membrane. In Helicobacter pylori (strain J99 / ATCC 700824) (Campylobacter pylori J99), this protein is Probable iron chelatin transport system permease protein jhp_0822.